We begin with the raw amino-acid sequence, 167 residues long: N5-carboxyaminoimidazole ribonucleotide mutase (167 aa).

Positions 11, 14, and 41 each coordinate substrate.

Belongs to the AIR carboxylase family. Class I subfamily.

It carries out the reaction 5-carboxyamino-1-(5-phospho-D-ribosyl)imidazole + H(+) = 5-amino-1-(5-phospho-D-ribosyl)imidazole-4-carboxylate. It functions in the pathway purine metabolism; IMP biosynthesis via de novo pathway; 5-amino-1-(5-phospho-D-ribosyl)imidazole-4-carboxylate from 5-amino-1-(5-phospho-D-ribosyl)imidazole (N5-CAIR route): step 2/2. Its function is as follows. Catalyzes the conversion of N5-carboxyaminoimidazole ribonucleotide (N5-CAIR) to 4-carboxy-5-aminoimidazole ribonucleotide (CAIR). The chain is N5-carboxyaminoimidazole ribonucleotide mutase from Aquifex aeolicus (strain VF5).